Here is a 328-residue protein sequence, read N- to C-terminus: Methionyl-tRNA formyltransferase (328 aa).

Residue 110–113 (SLLP) coordinates (6S)-5,6,7,8-tetrahydrofolate.

The protein belongs to the Fmt family.

The catalysed reaction is L-methionyl-tRNA(fMet) + (6R)-10-formyltetrahydrofolate = N-formyl-L-methionyl-tRNA(fMet) + (6S)-5,6,7,8-tetrahydrofolate + H(+). Functionally, attaches a formyl group to the free amino group of methionyl-tRNA(fMet). The formyl group appears to play a dual role in the initiator identity of N-formylmethionyl-tRNA by promoting its recognition by IF2 and preventing the misappropriation of this tRNA by the elongation apparatus. This Prochlorococcus marinus (strain MIT 9515) protein is Methionyl-tRNA formyltransferase.